The following is a 730-amino-acid chain: Actin filament-associated protein 1 (730 aa).

Methionine 1 carries the post-translational modification N-acetylmethionine. The tract at residues 47 to 91 is disordered; that stretch reads KDHAQKQETANSLPAPPQMPLPEIPQPWLPPDSGPPPLPTSSLPE. Positions 60 to 85 are enriched in pro residues; sequence PAPPQMPLPEIPQPWLPPDSGPPPLP. The short motif at 71–74 is the SH3-binding element; it reads PQPW. The SH2-binding 1 signature appears at 94–97; that stretch reads YEEA. Residues 119–140 are disordered; it reads SSSYESYDEEEEDGKGKKTRHQ. Positions 153–249 constitute a PH 1 domain; that stretch reads DAKICAFLLR…WLKVIKEAYS (97 aa). The disordered stretch occupies residues 252-292; the sequence is SGPVDSECPPPPSSPVHKAELEKKLSSERPSSDGEGVVENG. Basic and acidic residues predominate over residues 268–283; it reads HKAELEKKLSSERPSS. Phosphoserine is present on residues serine 282 and serine 283. One can recognise a PH 2 domain in the interval 347–441; that stretch reads DVPTCGYLNV…WIGILLAETG (95 aa). The SH2-binding 2 motif lies at 451 to 456; the sequence is YDYIDV. Positions 512–537 are disordered; sequence KGKKPPVASNGVTGKGKTLSSQPKKA. At serine 548 the chain carries Phosphoserine. The stretch at 557–648 forms a coiled coil; sequence KNRVEADAKR…VKESLKKALA (92 aa). The segment at 594–637 is interaction with F-actin; that stretch reads DLRAAIEVNAGRKPQAILEEKLKQLEEECRQKEAERVSLELELT. Phosphoserine is present on residues serine 664, serine 665, and serine 668. Position 675 is a phosphothreonine (threonine 675). Serine 679 and serine 687 each carry phosphoserine.

In terms of assembly, monomer and homomultimer. Interacts via its C-terminus with F-actin; probably involving AFAP1 multimers. Interacts with activated SRC SH3-SH2 domains. Interacts via its PH 1 domain with PRKCA, PRKCB and PRKCI. Phosphorylated on tyrosine residues by SRC. As to expression, low expression in normal breast epithelial cell line MCF-10A and in tumorigenic breast cancer cell lines MCF-7, T-47D and ZR-75-1. Highly expressed in the invasive breast cancer cell lines MDA-MB-231 and MDA-MB-435. Overexpressed in prostate carcinoma.

The protein resides in the cytoplasm. The protein localises to the cytoskeleton. Its subcellular location is the stress fiber. In terms of biological role, can cross-link actin filaments into both network and bundle structures. May modulate changes in actin filament integrity and induce lamellipodia formation. May function as an adapter molecule that links other proteins, such as SRC and PKC to the actin cytoskeleton. Seems to play a role in the development and progression of prostate adenocarcinoma by regulating cell-matrix adhesions and migration in the cancer cells. In Homo sapiens (Human), this protein is Actin filament-associated protein 1 (AFAP1).